The sequence spans 81 residues: Photosystem I iron-sulfur center (81 aa).

2 consecutive 4Fe-4S ferredoxin-type domains span residues 2–31 and 39–68; these read SHSV…MIPW and IAPA…VRVY. Positions 11, 14, 17, 21, 48, 51, 54, and 58 each coordinate [4Fe-4S] cluster.

In terms of assembly, the eukaryotic PSI reaction center is composed of at least 11 subunits. It depends on [4Fe-4S] cluster as a cofactor.

Its subcellular location is the plastid. The protein localises to the chloroplast thylakoid membrane. The catalysed reaction is reduced [plastocyanin] + hnu + oxidized [2Fe-2S]-[ferredoxin] = oxidized [plastocyanin] + reduced [2Fe-2S]-[ferredoxin]. Functionally, apoprotein for the two 4Fe-4S centers FA and FB of photosystem I (PSI); essential for photochemical activity. FB is the terminal electron acceptor of PSI, donating electrons to ferredoxin. The C-terminus interacts with PsaA/B/D and helps assemble the protein into the PSI complex. Required for binding of PsaD and PsaE to PSI. PSI is a plastocyanin-ferredoxin oxidoreductase, converting photonic excitation into a charge separation, which transfers an electron from the donor P700 chlorophyll pair to the spectroscopically characterized acceptors A0, A1, FX, FA and FB in turn. The sequence is that of Photosystem I iron-sulfur center from Liriodendron tulipifera (Tuliptree).